Reading from the N-terminus, the 561-residue chain is Glucose-6-phosphate isomerase (561 aa).

D-glucose 6-phosphate is bound by residues 171 to 172, 222 to 227, Gln366, Glu370, His401, and Lys525; these read GS and SKTFTT. Glu370 functions as the Proton donor in the catalytic mechanism. Active-site residues include His401 and Lys525.

Belongs to the GPI family. In terms of assembly, homodimer.

The protein localises to the cytoplasm. The protein resides in the cytosol. The catalysed reaction is alpha-D-glucose 6-phosphate = beta-D-fructose 6-phosphate. Its pathway is carbohydrate degradation; glycolysis; D-glyceraldehyde 3-phosphate and glycerone phosphate from D-glucose: step 2/4. Its function is as follows. In the cytoplasm, catalyzes the conversion of glucose-6-phosphate to fructose-6-phosphate, the second step in glycolysis, and the reverse reaction during gluconeogenesis. The chain is Glucose-6-phosphate isomerase (pgi-1) from Neurospora crassa (strain ATCC 24698 / 74-OR23-1A / CBS 708.71 / DSM 1257 / FGSC 987).